The primary structure comprises 503 residues: D-xylose-proton symporter-like 2 (503 aa).

Residues Met-1 to Ser-15 are compositionally biased toward polar residues. The segment at Met-1–Leu-32 is disordered. At Ala-2 the chain carries N-acetylalanine. Ser-26 bears the Phosphoserine mark. 12 helical membrane passes run Tyr-42–Gly-62, Gly-99–Gly-119, Leu-124–Tyr-144, Val-146–Pro-166, Phe-187–His-207, Met-213–Ala-233, Ala-305–Leu-325, Val-346–Asp-366, Leu-375–Phe-395, Val-400–Ile-420, Gly-437–Ser-457, and Ile-467–Val-487.

It belongs to the major facilitator superfamily. Sugar transporter (TC 2.A.1.1) family.

It is found in the membrane. The protein is D-xylose-proton symporter-like 2 of Arabidopsis thaliana (Mouse-ear cress).